Here is a 162-residue protein sequence, read N- to C-terminus: MNPVRKKRLIIVLAIVVGVGAAVGLALSALQQNINLFYTPTQIANGEAPTDTRIRAGGLVEKGSLQRSEDSLNVRFVVTDGAKEVTIAYHGILPDLFREGQGIVALGKLGGDGVLVADEVLAKHDENYMPPEVTKALKDSGQLKHYENGKAAGETSYNQEGK.

At 1-8 (MNPVRKKR) the chain is on the cytoplasmic side. A helical; Signal-anchor for type II membrane protein transmembrane segment spans residues 9–29 (LIIVLAIVVGVGAAVGLALSA). The Periplasmic segment spans residues 30-162 (LQQNINLFYT…GETSYNQEGK (133 aa)). The heme site is built by histidine 124 and tyrosine 128. A compositionally biased stretch (basic and acidic residues) spans 139 to 148 (DSGQLKHYEN). The segment at 139 to 162 (DSGQLKHYENGKAAGETSYNQEGK) is disordered.

Belongs to the CcmE/CycJ family.

Its subcellular location is the cell inner membrane. Functionally, heme chaperone required for the biogenesis of c-type cytochromes. Transiently binds heme delivered by CcmC and transfers the heme to apo-cytochromes in a process facilitated by CcmF and CcmH. In Pseudomonas aeruginosa (strain LESB58), this protein is Cytochrome c-type biogenesis protein CcmE.